The chain runs to 145 residues: U1 small nuclear ribonucleoprotein C (145 aa).

A Matrin-type zinc finger spans residues 4-36 (YYCDYCDTYLTHDSPSVRKTHCTGRKHRDNVKF). The disordered stretch occupies residues 67-91 (FAGGPGGAPPKPAGVSIPPPNMGAP). Over residues 73–91 (GAPPKPAGVSIPPPNMGAP) the composition is skewed to pro residues.

It belongs to the U1 small nuclear ribonucleoprotein C family. As to quaternary structure, U1 snRNP is composed of the 7 core Sm proteins B/B', D1, D2, D3, E, F and G that assemble in a heptameric protein ring on the Sm site of the small nuclear RNA to form the core snRNP, and at least 3 U1 snRNP-specific proteins U1-70K, U1-A and U1-C. U1-C interacts with U1 snRNA and the 5' splice-site region of the pre-mRNA.

The protein localises to the nucleus. Its function is as follows. Component of the spliceosomal U1 snRNP, which is essential for recognition of the pre-mRNA 5' splice-site and the subsequent assembly of the spliceosome. U1-C is directly involved in initial 5' splice-site recognition for both constitutive and regulated alternative splicing. The interaction with the 5' splice-site seems to precede base-pairing between the pre-mRNA and the U1 snRNA. Stimulates commitment or early (E) complex formation by stabilizing the base pairing of the 5' end of the U1 snRNA and the 5' splice-site region. Regulates alternative splicing of a distinct group of target genes. The chain is U1 small nuclear ribonucleoprotein C from Drosophila melanogaster (Fruit fly).